The sequence spans 173 residues: Cell division protein SepF (173 aa).

Positions 31–82 (FEDFDEPLDERPSRNRSPRDDSRNNAVTDSSDHSPSRNERRSPAPAPATADL) are disordered. 2 stretches are compositionally biased toward basic and acidic residues: residues 39-53 (DERP…DDSR) and 60-72 (SSDH…ERRS).

Belongs to the SepF family. Homodimer. Interacts with FtsZ.

Its subcellular location is the cytoplasm. Its function is as follows. Cell division protein that is part of the divisome complex and is recruited early to the Z-ring. Probably stimulates Z-ring formation, perhaps through the cross-linking of FtsZ protofilaments. Its function overlaps with FtsA. This chain is Cell division protein SepF, found in Thermobifida fusca (strain YX).